The chain runs to 377 residues: Palmitoyltransferase ZDHHC16 (377 aa).

The Cytoplasmic portion of the chain corresponds to methionine 1–arginine 77. The chain crosses the membrane as a helical span at residues tryptophan 78–alanine 98. At tyrosine 99–cysteine 116 the chain is on the lumenal side. A helical transmembrane segment spans residues tryptophan 117–isoleucine 137. Over threonine 138 to arginine 198 the chain is Cytoplasmic. The DHHC domain maps to serine 155–phenylalanine 205. Cysteine 185 functions as the S-palmitoyl cysteine intermediate in the catalytic mechanism. The chain crosses the membrane as a helical span at residues tyrosine 199 to tryptophan 219. The Lumenal portion of the chain corresponds to aspartate 220–serine 266. The helical transmembrane segment at leucine 267–tryptophan 287 threads the bilayer. Over histidine 288–valine 377 the chain is Cytoplasmic.

Belongs to the DHHC palmitoyltransferase family. As to quaternary structure, interacts with ABL1. Interacts with COPS5/JAB1. Widely expressed.

It localises to the endoplasmic reticulum membrane. The enzyme catalyses L-cysteinyl-[protein] + hexadecanoyl-CoA = S-hexadecanoyl-L-cysteinyl-[protein] + CoA. Functionally, palmitoyl acyltransferase that mediates palmitoylation of proteins such as PLN and ZDHHC6. Required during embryonic heart development and cardiac function, possibly by mediating palmitoylation of PLN, thereby affecting PLN phosphorylation and homooligomerization. Also required for eye development. Palmitoylates ZDHHC6, affecting the quaternary assembly of ZDHHC6, its localization, stability and function. May play a role in DNA damage response. May be involved in apoptosis regulation. Involved in the proliferation of neural stem cells by regulating the FGF/ERK pathway. The chain is Palmitoyltransferase ZDHHC16 from Homo sapiens (Human).